The sequence spans 297 residues: Large ribosomal subunit protein uL18 (297 aa).

Gly-2 bears the N-acetylglycine mark. An N6-acetyllysine mark is found at Lys-5 and Lys-48. The residue at position 185 (Ser-185) is a Phosphoserine. The residue at position 220 (Lys-220) is an N6-acetyllysine; alternate. Lys-220 participates in a covalent cross-link: Glycyl lysine isopeptide (Lys-Gly) (interchain with G-Cter in SUMO1); alternate. Residue Lys-220 forms a Glycyl lysine isopeptide (Lys-Gly) (interchain with G-Cter in SUMO2); alternate linkage. A Phosphothreonine modification is found at Thr-232. Positions 253–297 (YEKKPKKEVKKKRWNRPKMSLAQKKDRVAQKKASFLRAQERAAES) are disordered. The span at 258 to 268 (KKEVKKKRWNR) shows a compositional bias: basic residues. Residue Ser-272 is modified to Phosphoserine.

This sequence belongs to the universal ribosomal protein uL18 family. As to quaternary structure, component of the large ribosomal subunit (LSU). Part of the 5S RNP complex, which is a LSU subcomplex composed of the 5S RNA, RPL5 and RPL11. Component of a hexameric 5S RNP precursor complex, composed of 5S RNA, RRS1, RPF2/BXDC1, RPL5, RPL11 and HEATR3; this complex acts as a precursor for ribosome assembly. Interacts with isoform 1 of NVL in an ATP-dependent manner. Interacts with RRP1B. Interacts with IPO5, IPO7 and KPNB1; these interactions may be involved in RPL5 nuclear import for the assembly of ribosomal subunits.

The protein localises to the cytoplasm. The protein resides in the nucleus. It is found in the nucleolus. Component of the ribosome, a large ribonucleoprotein complex responsible for the synthesis of proteins in the cell. The small ribosomal subunit (SSU) binds messenger RNAs (mRNAs) and translates the encoded message by selecting cognate aminoacyl-transfer RNA (tRNA) molecules. The large subunit (LSU) contains the ribosomal catalytic site termed the peptidyl transferase center (PTC), which catalyzes the formation of peptide bonds, thereby polymerizing the amino acids delivered by tRNAs into a polypeptide chain. The nascent polypeptides leave the ribosome through a tunnel in the LSU and interact with protein factors that function in enzymatic processing, targeting, and the membrane insertion of nascent chains at the exit of the ribosomal tunnel. As part of the 5S RNP/5S ribonucleoprotein particle it is an essential component of the LSU, required for its formation and the maturation of rRNAs. It also couples ribosome biogenesis to p53/TP53 activation. As part of the 5S RNP it accumulates in the nucleoplasm and inhibits MDM2, when ribosome biogenesis is perturbed, mediating the stabilization and the activation of TP53. The protein is Large ribosomal subunit protein uL18 (RPL5) of Homo sapiens (Human).